We begin with the raw amino-acid sequence, 265 residues long: MKVERVLLKDYTTLGVGGPAELWTVETREELKRATEAPYRVLGNGSNLLVLDEGVPERVIRLAGEFQTYDLKGWVGAGTLLPLLVQEAARAGLSGLEGLLGIPAQVGGAVKMNAGTRFGEMADALEAVEVFHDGAFHVYCPEELGFGYRKSHLPPGGIVTRVRLKLKERPKEEILRRMAEVDRARKGQPKRKSAGCAFKNPPGQSAGRLIDERGLKGLRVGDAMISLEHGNFIVNLGQARAKDVLELVRRVQEELPLELEWEVWP.

An FAD-binding PCMH-type domain is found at 15 to 169; that stretch reads GVGGPAELWT…TRVRLKLKER (155 aa). Residue R149 is part of the active site. The segment at 182-203 is disordered; it reads DRARKGQPKRKSAGCAFKNPPG. C196 serves as the catalytic Proton donor.

It belongs to the MurB family. The cofactor is FAD.

It localises to the cytoplasm. It catalyses the reaction UDP-N-acetyl-alpha-D-muramate + NADP(+) = UDP-N-acetyl-3-O-(1-carboxyvinyl)-alpha-D-glucosamine + NADPH + H(+). It functions in the pathway cell wall biogenesis; peptidoglycan biosynthesis. Cell wall formation. In Thermus thermophilus (strain ATCC BAA-163 / DSM 7039 / HB27), this protein is UDP-N-acetylenolpyruvoylglucosamine reductase.